The following is a 223-amino-acid chain: DNA mismatch repair protein MutH (223 aa).

Belongs to the MutH family.

It is found in the cytoplasm. Functionally, sequence-specific endonuclease that cleaves unmethylated GATC sequences. It is involved in DNA mismatch repair. The protein is DNA mismatch repair protein MutH of Shewanella sp. (strain MR-7).